The chain runs to 784 residues: Toll-like receptor 2 (784 aa).

Residues 1-20 (MPRALWTAWVWAVISVFTEG) form the signal peptide. Residues 21 to 587 (ASDQASSLSC…ARLSLSECHR (567 aa)) lie on the Extracellular side of the membrane. C30 and C36 are joined by a disulfide. 19 LRR repeats span residues 54–77 (VKSL…RCVN), 78–101 (LKTL…HLRN), 102–125 (LEYL…SLYV), 126–150 (LKFL…HLPN), 151–175 (LRTL…GLTF), 176–199 (LEEL…SIQN), 200–223 (ISHL…IVSS), 224–250 (LDYL…INTS), 251–278 (VKKL…YVSG), 279–308 (ILEV…YLGN), 309–337 (VETL…LTGK), 338–361 (VKRV…HLKS), 362–388 (LEYL…AWPV), 389–414 (LQTL…TLKN), 415–437 (LNNL…WPGK), 438–457 (MKQL…CLPQ), 458–478 (TLEI…ILPQ), 479–500 (LKEL…FLPV), and 501–524 (LSVM…SFPQ). N114 carries N-linked (GlcNAc...) asparagine glycosylation. The N-linked (GlcNAc...) asparagine glycan is linked to N199. N248 carries an N-linked (GlcNAc...) asparagine glycan. A disulfide bridge connects residues C353 and C382. C432 and C454 form a disulfide bridge. An N-linked (GlcNAc...) asparagine glycan is attached at N442. One can recognise an LRRCT domain in the interval 525–579 (LKALEAGGNNFICSCDFLSFAQGQQALARVLVDWPDGYRCDAPSHVRGQRVQDAR). A helical membrane pass occupies residues 588–608 (AAVVSAVCCALFLLLLLTGVL). At 609–784 (CHRFHGLWYM…WLNLRAAIRS (176 aa)) the chain is on the cytoplasmic side. In terms of domain architecture, TIR spans 639–782 (LCYDAFVSYS…AFWLNLRAAI (144 aa)). K754 participates in a covalent cross-link: Glycyl lysine isopeptide (Lys-Gly) (interchain with G-Cter in ubiquitin). An ATG16L1-binding motif motif is present at residues 761–778 (YLEWPTDETHREAFWLNL).

This sequence belongs to the Toll-like receptor family. In terms of assembly, interacts with LY96, TLR1 and TLR6 (via extracellular domain). TLR2 seems to exist in heterodimers with either TLR1 or TLR6 before stimulation by the ligand. The heterodimers form bigger oligomers in response to their corresponding ligands as well as further heterotypic associations with other receptors such as CD14 and/or CD36. Binds MYD88 (via TIR domain). Interacts with TICAM1. Interacts with CNPY3. Interacts with ATG16L1. Interacts with PPP1R11. Interacts with TICAM2. Interacts with TIRAP. Post-translationally, ubiquitinated at Lys-754 by PPP1R11, leading to its degradation. Deubiquitinated by USP2. Glycosylation of Asn-442 is critical for secretion of the N-terminal ectodomain of TLR2.

The protein localises to the membrane. The protein resides in the cytoplasmic vesicle. Its subcellular location is the phagosome membrane. It localises to the membrane raft. Cooperates with LY96 to mediate the innate immune response to bacterial lipoproteins and other microbial cell wall components. Cooperates with TLR1 or TLR6 to mediate the innate immune response to bacterial lipoproteins or lipopeptides. Acts via MYD88 and TRAF6, leading to NF-kappa-B activation, cytokine secretion and the inflammatory response. May also promote apoptosis in response to lipoproteins. Forms activation clusters composed of several receptors depending on the ligand, these clusters trigger signaling from the cell surface and subsequently are targeted to the Golgi in a lipid-raft dependent pathway. Forms the cluster TLR2:TLR6:CD14:CD36 in response to diacylated lipopeptides and TLR2:TLR1:CD14 in response to triacylated lipopeptides. The sequence is that of Toll-like receptor 2 (TLR2) from Ovis aries (Sheep).